Here is a 344-residue protein sequence, read N- to C-terminus: Rho guanine nucleotide exchange factor 39 (344 aa).

The DH domain occupies 22–197 (KRVCTARELL…SETAQKVHAI (176 aa)). The 105-residue stretch at 227–331 (WFLRQGWLLV…WHHSLTLAIR (105 aa)) folds into the PH domain.

It localises to the cell membrane. Promotes cell proliferation. This Mus musculus (Mouse) protein is Rho guanine nucleotide exchange factor 39 (Arhgef39).